A 717-amino-acid polypeptide reads, in one-letter code: Asp/Glu-specific dipeptidyl-peptidase (717 aa).

An N-terminal signal peptide occupies residues 1–21 (MNKRFFPTLLLAFVCSTLAYA). Active-site charge relay system residues include His85, Asp226, and Ser652.

Belongs to the peptidase S46 family.

Its subcellular location is the secreted. The protein resides in the cell surface. Its activity is regulated as follows. Enzyme activity is completely blocked by diisopropyl-fluorophosphates, moderately by phenylmethylsulfonyl fluoride (PMSF) and 4-(2-methyl)benzenesulfonyl fluoride, and slightly by pepstatin in vitro. Catalyzes the removal of dipeptides from the N-terminus of oligopeptides. Shows a strict specificity for acidic residues (Asp or Glu) in the P1 position, and has a hydrophobic residue preference at the P2 position. Is likely involved in amino acid metabolism and bacterial growth/survival of asaccharolytic P.endodontalis, that utilizes amino acids from extracellular proteinaceous nutrients as energy and carbon sources. The chain is Asp/Glu-specific dipeptidyl-peptidase (dpp11) from Porphyromonas endodontalis (strain ATCC 35406 / DSM 24491 / JCM 8526 / CCUG 16442 / BCRC 14492 / NCTC 13058 / HG 370) (Bacteroides endodontalis).